Consider the following 371-residue polypeptide: Queuine tRNA-ribosyltransferase (371 aa).

The Proton acceptor role is filled by Asp-90. Substrate is bound by residues 90–94 (DSGGF), Asp-144, Gln-188, and Gly-215. The tract at residues 246–252 (GVGTPED) is RNA binding. Residue Asp-265 is the Nucleophile of the active site. An RNA binding; important for wobble base 34 recognition region spans residues 270–274 (TRNAR). Zn(2+) contacts are provided by Cys-303, Cys-305, Cys-308, and His-334.

The protein belongs to the queuine tRNA-ribosyltransferase family. In terms of assembly, homodimer. Within each dimer, one monomer is responsible for RNA recognition and catalysis, while the other monomer binds to the replacement base PreQ1. Requires Zn(2+) as cofactor.

The enzyme catalyses 7-aminomethyl-7-carbaguanine + guanosine(34) in tRNA = 7-aminomethyl-7-carbaguanosine(34) in tRNA + guanine. It participates in tRNA modification; tRNA-queuosine biosynthesis. Functionally, catalyzes the base-exchange of a guanine (G) residue with the queuine precursor 7-aminomethyl-7-deazaguanine (PreQ1) at position 34 (anticodon wobble position) in tRNAs with GU(N) anticodons (tRNA-Asp, -Asn, -His and -Tyr). Catalysis occurs through a double-displacement mechanism. The nucleophile active site attacks the C1' of nucleotide 34 to detach the guanine base from the RNA, forming a covalent enzyme-RNA intermediate. The proton acceptor active site deprotonates the incoming PreQ1, allowing a nucleophilic attack on the C1' of the ribose to form the product. After dissociation, two additional enzymatic reactions on the tRNA convert PreQ1 to queuine (Q), resulting in the hypermodified nucleoside queuosine (7-(((4,5-cis-dihydroxy-2-cyclopenten-1-yl)amino)methyl)-7-deazaguanosine). In Neisseria gonorrhoeae (strain ATCC 700825 / FA 1090), this protein is Queuine tRNA-ribosyltransferase.